The chain runs to 426 residues: Histidine--tRNA ligase (426 aa).

This sequence belongs to the class-II aminoacyl-tRNA synthetase family. In terms of assembly, homodimer.

It localises to the cytoplasm. The enzyme catalyses tRNA(His) + L-histidine + ATP = L-histidyl-tRNA(His) + AMP + diphosphate + H(+). In Streptococcus pyogenes serotype M3 (strain ATCC BAA-595 / MGAS315), this protein is Histidine--tRNA ligase.